Reading from the N-terminus, the 441-residue chain is Nucleoprotein (441 aa).

Ser-5 bears the Phosphoserine; by host mark. One can recognise a CoV N NTD domain in the interval 14-136 (VPLSLYAPLR…QLPSVVEIVE (123 aa)). The interval 16 to 146 (LSLYAPLRVT…PNTPPASRAN (131 aa)) is RNA-binding. 2 disordered regions span residues 131-219 (VVEI…VTSR) and 231-278 (KSLG…LKDI). Residue Ser-143 is modified to Phosphoserine; by host. Positions 143–215 (SRANSRSRSR…NRNQSNDRGG (73 aa)) are enriched in low complexity. Composition is skewed to basic and acidic residues over residues 238–255 (NPDR…KSDN) and 269–278 (TSKERDLKDI). A CoV N CTD domain is found at 266 to 382 (SRATSKERDL…AFKTGNAKLQ (117 aa)). The dimerization stretch occupies residues 277–379 (DIPEWRRIPK…QVDAFKTGNA (103 aa)).

Belongs to the alphacoronavirus nucleocapsid protein family. Homooligomer. Both monomeric and oligomeric forms interact with RNA. Interacts with protein M. Interacts with NSP3; this interaction serves to tether the genome to the newly translated replicase-transcriptase complex at a very early stage of infection. Interacts with host RSAD2; this interaction inhibits viral replication. In terms of processing, ADP-ribosylated. The ADP-ribosylation is retained in the virion during infection. Phosphorylated on serine and threonine residues.

Its subcellular location is the virion. The protein localises to the host endoplasmic reticulum-Golgi intermediate compartment. It localises to the host Golgi apparatus. Functionally, packages the positive strand viral genome RNA into a helical ribonucleocapsid (RNP) and plays a fundamental role during virion assembly through its interactions with the viral genome and membrane protein M. Plays an important role in enhancing the efficiency of subgenomic viral RNA transcription as well as viral replication. The protein is Nucleoprotein of Porcine epidemic diarrhea virus (strain CV777) (PEDV).